A 960-amino-acid polypeptide reads, in one-letter code: MPRAPHSMPLLLLLLLSLPQAQTAFPQDPIPLLTSDLQGTSPSSWFRGLEDDAVAAELGLDFQRFLTLNRTLLVAARDHVFSFDLQAQEEGEGLVPNKFLTWRSQDMENCAVRGKLTDECYNYIRVLVPWDSQTLLACGTNSFSPVCRSYGITSLQQEGEELSGQARCPFDATQSTVAISAEGSLYSATAADFQASDAVVYRSLGPQPPLRSAKYDSKWLREPHFVYALEHGDHVYFFFREVSVEDARLGRVQFSRVARVCKRDMGGSPRALDRHWTSFLKLRLNCSVPGDSTFYFDVLQSLTGPVNLHGRSALFGVFTTQTNSIPGSAVCAFYLDDIERGFEGKFKEQRSLDGAWTPVSEDKVPSPRPGSCAGVGAAALFSSSQDLPDDVLLFIKAHPLLDPAVPPATHQPLLTLTSRALLTQVAVDGMAGPHRNTTVLFLGSNDGTVLKVLPPGGQSLGPEPIILEEIDAYSHARCSGKRSPRAARRIIGLELDTEGHRLFVAFPGCIVYLSLSRCARHGACQRSCLASLDPYCGWHRFRGCVNIRGPGGTDVDLTGNQESMEHGDCQDGATGSQSGPGDSAYVLLGPGPSPETPSSPSDAHPGPQSSTLGAHTQGVRRDLSPASASRSIPIPLLLACVAAAFALGASVSGLLVSCACRRANRRRSKDIETPGLPRPLSLRSLARLHGGGPEPPPPPKDGDAAQTPQLYTTFLPPPEGGSPPELACLPTPETTPELPVKHLRASGGPWEWNQNGNNASEGPGRPRGCSAAGGPAPRVLVRPPPPGCPGQEVEVTTLEELLRYLHGPQPPRKGSEPLASAPFTSRPPASEPGAALFVDSSPMPRDCVPPLRLDVPPDGKRAAPSGRPALSAPAPRLGVSGSRRLPFPTHRAPPGLLTRVPSGGPSRYSGGPGRHLLYLGRPDGHRGRSLKRVDVKSPLSPKPPLATPPQPAPHGSHFNF.

Residues 1–23 (MPRAPHSMPLLLLLLLSLPQAQT) form the signal peptide. At 24–635 (AFPQDPIPLL…ASASRSIPIP (612 aa)) the chain is on the extracellular side. In terms of domain architecture, Sema spans 29 to 515 (PIPLLTSDLQ…FPGCIVYLSL (487 aa)). N-linked (GlcNAc...) asparagine glycosylation is present at Asn-69. Disulfide bonds link Cys-110–Cys-120, Cys-138–Cys-147, Cys-261–Cys-372, and Cys-286–Cys-331. The N-linked (GlcNAc...) asparagine glycan is linked to Asn-285. Asn-436 carries an N-linked (GlcNAc...) asparagine glycan. Intrachain disulfides connect Cys-478-Cys-509, Cys-518-Cys-536, Cys-524-Cys-569, and Cys-528-Cys-544. The interval 555 to 624 (VDLTGNQESM…HTQGVRRDLS (70 aa)) is disordered. Residues 636–656 (LLLACVAAAFALGASVSGLLV) form a helical membrane-spanning segment. The Cytoplasmic portion of the chain corresponds to 657-960 (SCACRRANRR…PAPHGSHFNF (304 aa)). Disordered regions lie at residues 685–725 (LARL…SPPE), 745–792 (ASGG…PGQE), and 806–960 (HGPQ…HFNF). Positions 899-909 (RVPSGGPSRYS) are enriched in low complexity. Residues 922–935 (PDGHRGRSLKRVDV) are compositionally biased toward basic and acidic residues. Residues 940-952 (SPKPPLATPPQPA) are compositionally biased toward pro residues.

The protein belongs to the semaphorin family. As to expression, expressed in many regions of the developing nervous system, probably in neurons and their precursors, but also in nonneural tissue such as immature muscle and dermis. In adult, strong expression in the skeletal muscle and moderate expression in the brain, where cerebellum shows the highest expression. Also expressed in almost all areas of the CNS.

Its subcellular location is the cell membrane. Its function is as follows. Shows growth cone collapsing activity on dorsal root ganglion (DRG) neurons in vitro. May be a stop signal for the DRG neurons in their target areas, and possibly also for other neurons. May also be involved in the maintenance and remodeling of neuronal connections. The protein is Semaphorin-6C (Sema6c) of Rattus norvegicus (Rat).